Consider the following 367-residue polypeptide: Choline-phosphate cytidylyltransferase A (367 aa).

N-acetylmethionine is present on Met-1. The interval 1 to 33 (MDAQCSAKVNARKRRKEAPGPNGATEEDGVPSK) is disordered. Lys-8 is subject to N6-acetyllysine. The CTP site is built by Ile-84, Phe-85, His-92, and Lys-122. The phosphocholine site is built by Lys-122 and Trp-151. The CTP site is built by His-168, Asp-169, Tyr-173, Gln-195, Arg-196, Thr-197, and Ile-200. 2 amphipathic regions span residues 228 to 287 (KELN…EFIG) and 298 to 315 (ALKH…QAIS). Ser-233 is subject to Phosphoserine. Positions 272–293 (IDLIQKWEEKSREFIGSFLEMF) are autoinhibitory (AI). The tract at residues 313–367 (AISPKQSPSSSPTRERSPSPSFRWPFSGKTSPPCSPANLSRHKAAAYDISEDEED) is disordered. Residues Ser-315, Ser-319, Ser-321, Ser-322, and Ser-323 each carry the phosphoserine modification. Repeat 1 spans residues 319 to 324 (SPSSSP). The span at 319–339 (SPSSSPTRERSPSPSFRWPFS) shows a compositional bias: low complexity. At Thr-325 the chain carries Phosphothreonine. 3 positions are modified to phosphoserine: Ser-329, Ser-331, and Ser-333. A 2; approximate repeat occupies 329 to 333 (SPSPS). Residue Thr-342 is modified to Phosphothreonine. Ser-343, Ser-347, Ser-352, and Ser-362 each carry phosphoserine. The stretch at 343 to 348 (SPPCSP) is repeat 3.

The protein belongs to the cytidylyltransferase family. As to quaternary structure, homodimer. In terms of processing, the serine residues of the C-terminus are phosphorylated. The inactive soluble form is stabilized by phosphorylation, the active membrane bound form is promoted by anionic lipids or diacylglycerol, and is stabilized by dephosphorylation. Monoubiquitinated by the SCF(FBXL2) complex, leading to proteasomal degradation. As to expression, brain, placenta, liver, fetal and adult lung.

It is found in the cytoplasm. Its subcellular location is the cytosol. It localises to the membrane. The protein resides in the endoplasmic reticulum membrane. The protein localises to the nucleus. It catalyses the reaction phosphocholine + CTP + H(+) = CDP-choline + diphosphate. It functions in the pathway phospholipid metabolism; phosphatidylcholine biosynthesis; phosphatidylcholine from phosphocholine: step 1/2. With respect to regulation, interconverts between an inactive cytosolic form and an active membrane-bound form. Activation involves disruption of an inhibitory interaction between helices at the base of the active site and the autoinhibitory (AI) region. Activated by anionic lipid vesicles and by oleic acid or diacylglycerol-containing phosphatidylcholine vesicles. In terms of biological role, catalyzes the key rate-limiting step in the CDP-choline pathway for phosphatidylcholine biosynthesis. This chain is Choline-phosphate cytidylyltransferase A (PCYT1A), found in Homo sapiens (Human).